The sequence spans 288 residues: Cyclic UMP-AMP synthase (288 aa).

The segment at 1-23 (MPVPESQLERWSHQGATTTAKKT) is disordered. Q46 provides a ligand contact to UTP. 46–48 (QGS) contributes to the ATP binding site. Mg(2+)-binding residues include D60 and D62. UTP contacts are provided by residues D62 and 116-120 (RKTLK). D129 serves as a coordination point for Mg(2+). N166 contacts UTP. Positions 194, 212, and 265 each coordinate ATP.

This sequence belongs to the CD-NTase family. E01 subfamily. The cofactor is Mg(2+).

It carries out the reaction UTP + ATP = 3',3'-cUAMP + 2 diphosphate. Cyclic nucleotide synthase (second messenger synthase) of a CBASS antivirus system. CBASS (cyclic oligonucleotide-based antiphage signaling system) provides immunity against bacteriophage. The CD-NTase protein synthesizes cyclic nucleotides in response to infection; these serve as specific second messenger signals. The signals activate a diverse range of effectors, leading to bacterial cell death and thus abortive phage infection. A type I-B(UU) CBASS system. In terms of biological role, cyclic dinucleotide synthase that catalyzes the synthesis of 3'3'-cyclic UMP-AMP (cUMP-AMP) from UTP and ATP, a second messenger for cell signal transduction. This Rhodothermus marinus (strain SG0.5JP17-172) protein is Cyclic UMP-AMP synthase.